The following is a 454-amino-acid chain: tRNA-2-methylthio-N(6)-dimethylallyladenosine synthase (454 aa).

The region spanning 6 to 122 (RRYHITTFGC…LQDLLQEVLA (117 aa)) is the MTTase N-terminal domain. Residues Cys15, Cys51, Cys85, Cys157, Cys161, and Cys164 each coordinate [4Fe-4S] cluster. The region spanning 143–380 (RESTVTAWVN…NHLVAIKAAE (238 aa)) is the Radical SAM core domain. Positions 383-447 (QRYLGRIEEV…AFSLTGEPVK (65 aa)) constitute a TRAM domain.

It belongs to the methylthiotransferase family. MiaB subfamily. Monomer. The cofactor is [4Fe-4S] cluster.

It localises to the cytoplasm. The enzyme catalyses N(6)-dimethylallyladenosine(37) in tRNA + (sulfur carrier)-SH + AH2 + 2 S-adenosyl-L-methionine = 2-methylsulfanyl-N(6)-dimethylallyladenosine(37) in tRNA + (sulfur carrier)-H + 5'-deoxyadenosine + L-methionine + A + S-adenosyl-L-homocysteine + 2 H(+). Functionally, catalyzes the methylthiolation of N6-(dimethylallyl)adenosine (i(6)A), leading to the formation of 2-methylthio-N6-(dimethylallyl)adenosine (ms(2)i(6)A) at position 37 in tRNAs that read codons beginning with uridine. The sequence is that of tRNA-2-methylthio-N(6)-dimethylallyladenosine synthase from Gloeothece citriformis (strain PCC 7424) (Cyanothece sp. (strain PCC 7424)).